Here is a 190-residue protein sequence, read N- to C-terminus: Lipid A 1-phosphatase (190 aa).

Transmembrane regions (helical) follow at residues 22 to 42 (LLAL…PKVP), 60 to 80 (FIPT…VGLF), 117 to 137 (GNFN…AFLM), 145 to 162 (YFWL…RIYL), and 164 to 184 (MHTI…VSLF).

It belongs to the lipid A LpxE 1-phosphatase family. It depends on Does not require divalent cations. as a cofactor.

It is found in the cell inner membrane. The protein operates within bacterial outer membrane biogenesis; LPS lipid A biosynthesis. Its function is as follows. Removes the 1-phosphate group from tetra- and probably hexaacylated lipid A species, has no requirement for the Kdo moiety of lipid A. Has no 4'-phosphatase activity. Has no activity on phospholipids (phosphatidylglycerol, phosphatidylethanolamine or cardiolipin). This enzyme has to act before EptA can attach phosphoethanolamine to the 1-position of lipid A. Absence of the 1-phosphate group renders the bacteria partially resistant to host-derived cationic antimicrobial peptides (CAMP), allowing it to camouflage itself from the host innate immune response, and plays a role in the long-term colonization of the host's stomach. In Helicobacter pylori (strain ATCC 700392 / 26695) (Campylobacter pylori), this protein is Lipid A 1-phosphatase.